A 219-amino-acid chain; its full sequence is Large ribosomal subunit protein uL4 (219 aa).

Residues 45 to 103 form a disordered region; that stretch reads ARRQGTHATKTRGQVRGGGRKPYRQKGTGRARQGSIRAPQFTGGGTVHGPQPRDYDQRT. Positions 62–73 are enriched in basic residues; that stretch reads GGRKPYRQKGTG.

It belongs to the universal ribosomal protein uL4 family. Part of the 50S ribosomal subunit.

Its function is as follows. One of the primary rRNA binding proteins, this protein initially binds near the 5'-end of the 23S rRNA. It is important during the early stages of 50S assembly. It makes multiple contacts with different domains of the 23S rRNA in the assembled 50S subunit and ribosome. Forms part of the polypeptide exit tunnel. The protein is Large ribosomal subunit protein uL4 of Corynebacterium kroppenstedtii (strain DSM 44385 / JCM 11950 / CIP 105744 / CCUG 35717).